The primary structure comprises 128 residues: Cytochrome c-type biogenesis protein CcmE (128 aa).

Over 1–8 (MQKRVRNR) the chain is Cytoplasmic. A helical; Signal-anchor for type II membrane protein transmembrane segment spans residues 9 to 29 (LITIIICFCSACLGISIILYN). The Periplasmic segment spans residues 30-128 (LEKNIVFFLP…KHDENYRPPQ (99 aa)). His-120 and Tyr-124 together coordinate heme.

This sequence belongs to the CcmE/CycJ family.

The protein resides in the cell inner membrane. In terms of biological role, heme chaperone required for the biogenesis of c-type cytochromes. Transiently binds heme delivered by CcmC and transfers the heme to apo-cytochromes in a process facilitated by CcmF and CcmH. This Rickettsia peacockii (strain Rustic) protein is Cytochrome c-type biogenesis protein CcmE.